Consider the following 326-residue polypeptide: JNK1/MAPK8-associated membrane protein homolog (326 aa).

Residues 1-71 (MSSLSGHAST…CESCDTPLQP (71 aa)) lie on the Lumenal side of the membrane. A glycan (N-linked (GlcNAc...) asparagine) is linked at Asn27. The helical transmembrane segment at 72-92 (YDWMYLLFIALLPLLLHMQFI) threads the bilayer. The Cytoplasmic portion of the chain corresponds to 93 to 108 (RIARKYCRTRYYEVSE). Residues 109–129 (YLCVILENVIACVIAVLIYPP) traverse the membrane as a helical segment. Topologically, residues 130–166 (RFTFFLNGCSKTDIKEWYPACYNPRIGYTKTMRCTYE) are lumenal. Residues 167-187 (VVFPLYSITFIHHLILIGSIL) form a helical membrane-spanning segment. Residues 188–208 (VLRSTLYCVLLYKTYNGKPFY) are Cytoplasmic-facing. 2 helical membrane-spanning segments follow: residues 209-229 (AAIV…GVVF) and 230-250 (YTFP…HLAL). Topologically, residues 251-269 (EGKRPLKEMIVRIATSPTH) are cytoplasmic. Residues 270 to 290 (LIFLSITMLMLSFGVIAIIAP) form a helical membrane-spanning segment. Residues 291–296 (LDIPYR) lie on the Lumenal side of the membrane. The helical transmembrane segment at 297–317 (WSFLCIVPVPFIFYMATIPFS) threads the bilayer. The Cytoplasmic segment spans residues 318-326 (NPTTTMRLS).

The protein localises to the endoplasmic reticulum membrane. Facilitates degradation of misfolded endoplasmic reticulum (ER) proteins through the recruitment of components of the proteasome and endoplasmic reticulum-associated degradation (ERAD) system. Involved in ER stress response. This is JNK1/MAPK8-associated membrane protein homolog from Caenorhabditis elegans.